Reading from the N-terminus, the 64-residue chain is Large ribosomal subunit protein bL35 (64 aa).

This sequence belongs to the bacterial ribosomal protein bL35 family.

This chain is Large ribosomal subunit protein bL35, found in Pelodictyon phaeoclathratiforme (strain DSM 5477 / BU-1).